The following is a 350-amino-acid chain: MFS transporter OpS2 (350 aa).

Helical transmembrane passes span 3–23, 34–54, 65–85, 141–161, 174–194, 227–247, 253–273, and 312–332; these read FLAG…VADL, GYFF…GGIL, WGAV…LPET, FMTC…NLAI, AIIL…ASVV, MCEN…VFGW, IFWF…SLIF, and PLLG…ICWA.

This sequence belongs to the major facilitator superfamily.

The protein resides in the cell membrane. Functionally, MFS transporter; part of the gene cluster that mediates the biosynthesis of the bibenzoquinone oosporein, a metabolite required for fungal virulence that acts by evading host immunity to facilitate fungal multiplication in insects. The function of this putative MFS transporter remains unclear since its deletion leads to increased oosporein production. The sequence is that of MFS transporter OpS2 from Beauveria bassiana (strain ARSEF 2860) (White muscardine disease fungus).